Reading from the N-terminus, the 1255-residue chain is Bifunctional autolysin (1255 aa).

The signal sequence occupies residues 1–36 (MLGVINRMAKKFNYKLPSMVALTLVGSAVTAHQVQA). Disordered stretches follow at residues 110 to 141 (GDTR…NTNV) and 193 to 218 (VTTF…KYKP). The N-acetylmuramoyl-L-alanine amidase stretch occupies residues 199–775 (SAQPRSVAAT…VAQPKTAVKA (577 aa)). GW domains are found at residues 442-516 (TVAA…YNTA), 518-592 (SPVN…DTAK), 611-685 (TVSS…YNNA), 687-761 (SPVN…VPAA), 783-858 (TTQT…VQNL), 860-935 (KEVK…APTA), and 942-1016 (AAKD…KELI). Residues 776 to 1255 (YTVTKPQTTQ…GKYFDIPQYK (480 aa)) are endo-beta-N-acetylglucosaminidase.

This sequence in the N-terminal section; belongs to the N-acetylmuramoyl-L-alanine amidase 2 family. In the C-terminal section; belongs to the glycosyl hydrolase 73 family. Oligomer; forms a ring structure at the cell surface which is important for efficient partitioning of daughter cells after cell division. Undergoes proteolytic processing to generate the two extracellular lytic enzymes, probably at the septal region on the cell surface.

The protein localises to the secreted. The enzyme catalyses Hydrolyzes the link between N-acetylmuramoyl residues and L-amino acid residues in certain cell-wall glycopeptides.. The catalysed reaction is an N(4)-(oligosaccharide-(1-&gt;3)-[oligosaccharide-(1-&gt;6)]-beta-D-Man-(1-&gt;4)-beta-D-GlcNAc-(1-&gt;4)-alpha-D-GlcNAc)-L-asparaginyl-[protein] + H2O = an oligosaccharide-(1-&gt;3)-[oligosaccharide-(1-&gt;6)]-beta-D-Man-(1-&gt;4)-D-GlcNAc + N(4)-(N-acetyl-beta-D-glucosaminyl)-L-asparaginyl-[protein]. Endohydrolysis of the di-N-acetylchitobiosyl unit in high-mannose glycopeptides and glycoproteins containing the -[(Man)5(GlcNAc)2]-Asn structure. One N-acetyl-D-glucosamine residue remains attached to the protein; the rest of the oligosaccharide is released intact. Cleaves the peptidoglycan connecting the daughter cells at the end of the cell division cycle, resulting in the separation of the two newly divided cells. Acts as an autolysin in penicillin-induced lysis. The polypeptide is Bifunctional autolysin (atl) (Staphylococcus aureus (strain Mu3 / ATCC 700698)).